The chain runs to 192 residues: MSIQNTFPSYQSLTLALNQQAVALTAAEMHGLISGLLCGGSRDAGWQSLVYDLTNEGVAFPQALSLPLQQLHEITRETLEDDDFMFQLMMPEGETVSVFDRADALSGWVNHFLLGLGMMQPKLAQVKDEVGEAIDDLRNIAQLGYEEDEDQEELEHSLEEVVEYVRMAAILCHTEFTRRKPTAPENAKPTLH.

It belongs to the UPF0149 family.

This Serratia proteamaculans (strain 568) protein is UPF0149 protein Spro_3920.